We begin with the raw amino-acid sequence, 131 residues long: DNA-binding protein inhibitor ID-4 (131 aa).

The bHLH domain maps to A36 to L88.

As to quaternary structure, heterodimer with other HLH proteins. As to expression, during embryonic development, expressed in a number of neural tissues, including Rohon-Beard neurons, olfactory placode, eye primordia, and the trigeminal ganglia. Also expressed in other organs including the pronephros and liver primordium. Pronephric development begins by stage 25 and increases during tailbud stages. Expressed in both the tubules and the duct. As embryogenesis progresses, expressed in the migrating melanocytes and lateral line structures.

Its subcellular location is the nucleus. In terms of biological role, transcriptional regulator (lacking a basic DNA binding domain) which negatively regulates the basic helix-loop-helix (bHLH) transcription factors by forming heterodimers and inhibiting their DNA binding and transcriptional activity. Inhibits the activity of both neurogenic (neurog1/neurogenin, neurod1/neuroD) and myogenic (myod1/myoD) bHLH factors. This is DNA-binding protein inhibitor ID-4 from Xenopus laevis (African clawed frog).